We begin with the raw amino-acid sequence, 262 residues long: Plant intracellular Ras-group-related LRR protein 7 (262 aa).

LRR repeat units lie at residues 19-42, 43-66, 68-89, 90-112, 113-135, 137-158, 159-181, 182-204, and 206-231; these read WRST…VLQV, GNSL…VGTL, NMQR…IGYL, RNLK…LGSL, SNLQ…VGDL, NMLL…IGGC, SSLE…ICNL, VCLK…LLKD, and KALQ…GFTE.

This sequence belongs to the SHOC2 family. Widely expressed and preferentially in leaf sheathes.

In terms of biological role, leucine-rich repeat protein that likely mediates protein interactions, possibly in the context of signal transduction. This is Plant intracellular Ras-group-related LRR protein 7 (IRL7) from Oryza sativa subsp. japonica (Rice).